The following is a 404-amino-acid chain: Serine/threonine transporter SstT (404 aa).

The next 9 helical transmembrane spans lie at 11-31, 44-64, 82-102, 144-164, 179-199, 218-238, 290-310, 316-336, and 363-383; these read IINA…IILA, LGGL…FVLV, IISL…TMSF, TANY…LHHA, VSFI…GLVA, GVLL…MVFI, IPLG…VLTL, MGIQ…AISA, and VAMQ…SAET.

The protein belongs to the dicarboxylate/amino acid:cation symporter (DAACS) (TC 2.A.23) family.

It localises to the cell inner membrane. It catalyses the reaction L-serine(in) + Na(+)(in) = L-serine(out) + Na(+)(out). The catalysed reaction is L-threonine(in) + Na(+)(in) = L-threonine(out) + Na(+)(out). Its function is as follows. Involved in the import of serine and threonine into the cell, with the concomitant import of sodium (symport system). The protein is Serine/threonine transporter SstT of Desulfotalea psychrophila (strain LSv54 / DSM 12343).